Consider the following 548-residue polypeptide: Organic cation transporter protein (548 aa).

At 1–22 (MGYDDVITHLGEFGPYQKRIYY) the chain is on the cytoplasmic side. Residues 23–43 (LLCLPAIVCAFHKLAGVFLLA) form a helical membrane-spanning segment. The Extracellular portion of the chain corresponds to 44 to 127 (KPDFRCALPY…TEWNLVCSRS (84 aa)). 4 N-linked (GlcNAc...) asparagine glycosylation sites follow: asparagine 55, asparagine 67, asparagine 89, and asparagine 97. The chain crosses the membrane as a helical span at residues 128 to 148 (LLSATSDSLFMLGVLLGSLIF). Over 149 to 158 (GQMSDKLGRK) the chain is Cytoplasmic. A helical membrane pass occupies residues 159–179 (PTFFASLVLQLIFGVLAAVAP). Residues 180-189 (EYFSYTISRM) are Extracellular-facing. Residues 190–210 (IVGATTSGVFLVAYVIALEMV) form a helical membrane-spanning segment. The Cytoplasmic segment spans residues 211-219 (GSSYRLFAG). The chain crosses the membrane as a helical span at residues 220–240 (VAMQMFFSVGFMLTAGFAYFI). At 241-244 (HDWR) the chain is on the extracellular side. The chain crosses the membrane as a helical span at residues 245 to 265 (WLQIAITLPGLLFLCYYWIIP). Over 266 to 337 (ESARWLLMKG…LLRYPNLRRK (72 aa)) the chain is Cytoplasmic. A helical membrane pass occupies residues 338–358 (TLLIFFDWFVNSGVYYGLSWN). Topologically, residues 359–366 (TNNLGGNQ) are extracellular. The chain crosses the membrane as a helical span at residues 367–387 (LVNFMISGAVEIPGYTLLLFT). At 388–395 (LNRWGRRS) the chain is on the cytoplasmic side. Residues 396 to 416 (ILCGTMMVAGISLLATIFVPS) traverse the membrane as a helical segment. The Extracellular segment spans residues 417-419 (DMN). A helical transmembrane segment spans residues 420-440 (WLIVACAMIGKLAITSSYGTI). Residues 441 to 453 (YIFSAEQFPTVVR) lie on the Cytoplasmic side of the membrane. Residues 454-474 (NVGLGASSMVARVGGILAPYL) form a helical membrane-spanning segment. Over 475-482 (KLLGEIWR) the chain is Extracellular. Residues 483-503 (PLPLIICGALSLTAGLLSLLL) form a helical membrane-spanning segment. At 504 to 548 (PETLNKPMPETIEDGENFGKKPAPQETAEEGGTQELSGMLNGKSG) the chain is on the cytoplasmic side. A disordered region spans residues 512-548 (PETIEDGENFGKKPAPQETAEEGGTQELSGMLNGKSG).

It belongs to the major facilitator (TC 2.A.1) superfamily. Organic cation transporter (TC 2.A.1.19) family. As to expression, expressed in embryos and adults at low level. Expressed at higher level in third instar larvae.

The protein localises to the membrane. In terms of biological role, probably transports organic cations. This Drosophila melanogaster (Fruit fly) protein is Organic cation transporter protein (Orct).